The chain runs to 522 residues: MKPIARALISVSDKTGIVPFAHRLQARGVKILSTGGSAQLLQKNNIGATEISTYTGFPEMMGGRIKTLHPKIHGGILGRRETDATTMAEYNIAPIDLVAVNLYPFEQTVAKPDCDLATAIENIDIGGPTLLRAAAKNHAAVTVIVDPDDYERVLREMEANGGALSSSTRFELAVKSFEHTARYDATIANYLGALTPNGEKSAFPRSYNIQFAKKQEMRYGENPHQRAAFYVEQPPPAGTIATAQQLQGKTLSFNNIADTDAALACVKAFREAPTCVIVKHANPCGVATGINLQEAYERAYAADPVSAFGGIIAFNEPLDPTTAKTIIKRQFAEVIIAPAVTTTAQEILTSKPNIRVLACGEWSSQTAAGWDYKRIVGGLLLQDQDTDTVPLEALQTVTERSPTPQELKDLLFAWQVVKFVKSNAIVYAKNGRTIGVGAGQTSRVMSSQIAELKAKEAGFSTQNAVLASDAFFPFRDGLEAAAKAGICAVIQPGGSRRDKEVIAAANEWDMAMLFTGMRHFRH.

The MGS-like domain maps to 1–145 (MKPIARALIS…KNHAAVTVIV (145 aa)).

This sequence belongs to the PurH family.

It catalyses the reaction (6R)-10-formyltetrahydrofolate + 5-amino-1-(5-phospho-beta-D-ribosyl)imidazole-4-carboxamide = 5-formamido-1-(5-phospho-D-ribosyl)imidazole-4-carboxamide + (6S)-5,6,7,8-tetrahydrofolate. The catalysed reaction is IMP + H2O = 5-formamido-1-(5-phospho-D-ribosyl)imidazole-4-carboxamide. It functions in the pathway purine metabolism; IMP biosynthesis via de novo pathway; 5-formamido-1-(5-phospho-D-ribosyl)imidazole-4-carboxamide from 5-amino-1-(5-phospho-D-ribosyl)imidazole-4-carboxamide (10-formyl THF route): step 1/1. The protein operates within purine metabolism; IMP biosynthesis via de novo pathway; IMP from 5-formamido-1-(5-phospho-D-ribosyl)imidazole-4-carboxamide: step 1/1. This is Bifunctional purine biosynthesis protein PurH from Nitrosococcus oceani (strain ATCC 19707 / BCRC 17464 / JCM 30415 / NCIMB 11848 / C-107).